The primary structure comprises 387 residues: Phosphoglycerate kinase (387 aa).

Substrate contacts are provided by residues 21–23 (DLN), Arg-36, 59–62 (HLGR), Arg-113, and Arg-146. Residues Lys-197, Glu-314, and 340–343 (GGDT) each bind ATP.

This sequence belongs to the phosphoglycerate kinase family. As to quaternary structure, monomer.

The protein resides in the cytoplasm. The enzyme catalyses (2R)-3-phosphoglycerate + ATP = (2R)-3-phospho-glyceroyl phosphate + ADP. Its pathway is carbohydrate degradation; glycolysis; pyruvate from D-glyceraldehyde 3-phosphate: step 2/5. In Aliivibrio fischeri (strain MJ11) (Vibrio fischeri), this protein is Phosphoglycerate kinase.